Reading from the N-terminus, the 311-residue chain is Methionyl-tRNA formyltransferase (311 aa).

109–112 provides a ligand contact to (6S)-5,6,7,8-tetrahydrofolate; that stretch reads SLLP.

Belongs to the Fmt family.

It catalyses the reaction L-methionyl-tRNA(fMet) + (6R)-10-formyltetrahydrofolate = N-formyl-L-methionyl-tRNA(fMet) + (6S)-5,6,7,8-tetrahydrofolate + H(+). Functionally, attaches a formyl group to the free amino group of methionyl-tRNA(fMet). The formyl group appears to play a dual role in the initiator identity of N-formylmethionyl-tRNA by promoting its recognition by IF2 and preventing the misappropriation of this tRNA by the elongation apparatus. The polypeptide is Methionyl-tRNA formyltransferase (Moorella thermoacetica (strain ATCC 39073 / JCM 9320)).